Here is a 233-residue protein sequence, read N- to C-terminus: MEAMSGLSSPCNCISSLPHSSSTTTRHQNLLFRRNNHHQQKLAAFHSQSHLFSTKCPLISHSLPRKKSFKPHIFLPHLVASMEQVEETYIMIKPDGVQRGLVGEIISRFEKKGFKLIGLKMYPCPKELAEEHYKDLKAKSFYQKLIDYITSGPVVCMAWEGVGVVASSRKLIGATDPLQAEPGTIRGDLAVQTGRNVVHGSDSPDNGKREIGLWFKEGEICQWTPAQAPWLRE.

A chloroplast-targeting transit peptide spans 1 to 67; it reads MEAMSGLSSP…LISHSLPRKK (67 aa). Residues Lys93, Phe141, Arg169, Thr175, Arg186, and Asn196 each contribute to the ATP site. Catalysis depends on His199, which acts as the Pros-phosphohistidine intermediate.

The protein belongs to the NDK family. Requires Mg(2+) as cofactor.

The protein resides in the plastid. Its subcellular location is the chloroplast. It carries out the reaction a 2'-deoxyribonucleoside 5'-diphosphate + ATP = a 2'-deoxyribonucleoside 5'-triphosphate + ADP. The catalysed reaction is a ribonucleoside 5'-diphosphate + ATP = a ribonucleoside 5'-triphosphate + ADP. Functionally, major role in the synthesis of nucleoside triphosphates other than ATP. The ATP gamma phosphate is transferred to the NDP beta phosphate via a ping-pong mechanism, using a phosphorylated active-site intermediate. The polypeptide is Nucleoside diphosphate kinase 2, chloroplastic (NDPK2) (Spinacia oleracea (Spinach)).